The primary structure comprises 21 residues: Endo-1,4-beta-xylanase A (21 aa).

Belongs to the glycosyl hydrolase 10 (cellulase F) family.

It catalyses the reaction Endohydrolysis of (1-&gt;4)-beta-D-xylosidic linkages in xylans.. The protein operates within glycan degradation; xylan degradation. The sequence is that of Endo-1,4-beta-xylanase A from Dictyoglomus sp. (strain B4A).